A 174-amino-acid polypeptide reads, in one-letter code: Ubiquinone biosynthesis accessory factor UbiT (174 aa).

One can recognise an SCP2 domain in the interval 45-133 (LDDGELEFLE…LGLYVKNLMD (89 aa)).

It belongs to the UbiT family.

It participates in cofactor biosynthesis; ubiquinone biosynthesis. Functionally, required for O(2)-independent ubiquinone (coenzyme Q) biosynthesis. Likely functions as an accessory factor. The chain is Ubiquinone biosynthesis accessory factor UbiT from Escherichia coli O157:H7.